The sequence spans 64 residues: Protein DsrB (64 aa).

The protein belongs to the DsrB family.

The chain is Protein DsrB from Salmonella enteritidis PT4 (strain P125109).